The sequence spans 296 residues: Aldo-keto reductase MYCFIDRAFT_156381 (296 aa).

Residue Asp-14 coordinates NADP(+). Catalysis depends on Tyr-19, which acts as the Proton donor. Residue His-83 participates in substrate binding. Residues Cys-113–Asn-114, Gln-139, Ser-168–Arg-178, and Arg-191 contribute to the NADP(+) site. Position 201 (Tyr-201) interacts with substrate. Ser-255 to Asn-263 is an NADP(+) binding site.

The protein belongs to the aldo/keto reductase family. Aldo/keto reductase 2 subfamily.

It participates in secondary metabolite biosynthesis. In terms of biological role, aldo-keto reductase; part of the gene cluster that mediates the biosynthesis of an emodin derivative that may be involved in black Sigatoka disease of banana. The pathway begins with the synthesis of atrochrysone thioester by the polyketide synthase PKS8-1. The atrochrysone carboxyl ACP thioesterase MYCFIDRAFT_190111 then breaks the thioester bond and releases the atrochrysone carboxylic acid from PKS8-1. The decarboxylase MYCFIDRAFT_34057 then catalyzes the concerted decarboxylation-elimination required to convert atochrysone carboxylic acid into emodin anthrone, which is further oxidized to emodin by the anthrone oxygenase MYCFIDRAFT_34418. The functions of the other tailoring enzymes as well as the final product of the cluster have still to be identified. This is Aldo-keto reductase MYCFIDRAFT_156381 from Pseudocercospora fijiensis (strain CIRAD86) (Black leaf streak disease fungus).